The chain runs to 101 residues: Small ribosomal subunit protein uS14 (101 aa).

This sequence belongs to the universal ribosomal protein uS14 family. As to quaternary structure, part of the 30S ribosomal subunit. Contacts proteins S3 and S10.

Binds 16S rRNA, required for the assembly of 30S particles and may also be responsible for determining the conformation of the 16S rRNA at the A site. The chain is Small ribosomal subunit protein uS14 from Methylorubrum populi (strain ATCC BAA-705 / NCIMB 13946 / BJ001) (Methylobacterium populi).